We begin with the raw amino-acid sequence, 332 residues long: tRNA uridine(34) hydroxylase (332 aa).

One can recognise a Rhodanese domain in the interval 123–217; that stretch reads SDPEVLLVDT…YLEEVKQEES (95 aa). Catalysis depends on Cys177, which acts as the Cysteine persulfide intermediate. The tract at residues 302 to 332 is disordered; sequence SDVGAVIQSRRDNKENLKKSQVKLNNKKYNK. Residues 310 to 319 show a composition bias toward basic and acidic residues; it reads SRRDNKENLK.

This sequence belongs to the TrhO family.

The enzyme catalyses uridine(34) in tRNA + AH2 + O2 = 5-hydroxyuridine(34) in tRNA + A + H2O. Its function is as follows. Catalyzes oxygen-dependent 5-hydroxyuridine (ho5U) modification at position 34 in tRNAs. The protein is tRNA uridine(34) hydroxylase of Shewanella woodyi (strain ATCC 51908 / MS32).